The following is a 618-amino-acid chain: 1-deoxy-D-xylulose-5-phosphate synthase (618 aa).

Residues His76 and 117–119 each bind thiamine diphosphate; that span reads GHS. Residue Asp148 coordinates Mg(2+). Thiamine diphosphate-binding positions include 149–150, Asn177, Tyr284, and Glu364; that span reads GA. Asn177 contributes to the Mg(2+) binding site.

Belongs to the transketolase family. DXPS subfamily. In terms of assembly, homodimer. Mg(2+) is required as a cofactor. Requires thiamine diphosphate as cofactor.

The enzyme catalyses D-glyceraldehyde 3-phosphate + pyruvate + H(+) = 1-deoxy-D-xylulose 5-phosphate + CO2. The protein operates within metabolic intermediate biosynthesis; 1-deoxy-D-xylulose 5-phosphate biosynthesis; 1-deoxy-D-xylulose 5-phosphate from D-glyceraldehyde 3-phosphate and pyruvate: step 1/1. In terms of biological role, catalyzes the acyloin condensation reaction between C atoms 2 and 3 of pyruvate and glyceraldehyde 3-phosphate to yield 1-deoxy-D-xylulose-5-phosphate (DXP). The chain is 1-deoxy-D-xylulose-5-phosphate synthase from Francisella philomiragia subsp. philomiragia (strain ATCC 25017 / CCUG 19701 / FSC 153 / O#319-036).